A 620-amino-acid chain; its full sequence is Glutathione-regulated potassium-efflux system protein KefC (620 aa).

12 consecutive transmembrane segments (helical) span residues 4–24 (HTLIQALIYLGSAALIVPIAV), 26–46 (LGLGSVLGYLIAGCIIGPWGL), 54–74 (SILHFAEIGVVLMLFIIGLEL), 90–110 (GALQMVICGGLLGLFCMLLGL), 114–134 (VAELIGMTLALSSTAIAMQAM), 149–169 (FAVLLFQDIAAIPLVAMIPLL), 178–198 (MGAFVLSALKVAGALVLVVLL), 218–238 (VFSAVALFLVFGFGLLLEEVG), 270–290 (GLLLGLFFIGVGMSIDFGTLL), 294–314 (LRIVILLLGFLIIKIAMLWLI), 327–347 (WFAVLLGQGSEFAFVVFGAAQ), and 359–379 (SLTLAVALSMAATPILLVILN). The RCK N-terminal domain occupies 399–518 (QPRVIIAGFG…AGVEKPERET (120 aa)). The disordered stretch occupies residues 597 to 620 (GWQGTEEGKHTGNMADEPETKPSS).

Belongs to the monovalent cation:proton antiporter 2 (CPA2) transporter (TC 2.A.37) family. KefC subfamily. In terms of assembly, homodimer. Interacts with the regulatory subunit KefF.

It is found in the cell inner membrane. Pore-forming subunit of a potassium efflux system that confers protection against electrophiles. Catalyzes K(+)/H(+) antiport. The chain is Glutathione-regulated potassium-efflux system protein KefC from Escherichia coli O127:H6 (strain E2348/69 / EPEC).